The chain runs to 314 residues: Trimethylamine N-oxide-binding protein (314 aa).

Positions 1–24 (MKKIVSLMSALVISVVSFAGISNA) are cleaved as a signal peptide. Residues Trp38, Trp85, Glu114, Trp164, and Trp212 each coordinate trimethylamine N-oxide.

In terms of assembly, the complex is probably composed of two ATP-binding proteins (TmoW), two transmembrane proteins (TmoV) and a solute-binding protein (TmoX).

Its subcellular location is the periplasm. Its function is as follows. Part of the ABC transporter complex TmoXWV involved in trimethylamine N-oxide (TMAO) import. Possesses a high binding affinity toward TMAO, but presents little binding affinity toward betaine, carnitine, trimethylamine (TMA) or dimethylamine (DMA). This chain is Trimethylamine N-oxide-binding protein, found in Pelagibacter ubique (strain HTCC1062).